The chain runs to 534 residues: Cytidylyl-2-hydroxyethylphosphonate methyltransferase (534 aa).

In terms of domain architecture, B12-binding spans 38-195; that stretch reads KVLLLNPSAT…EHLNGNVSDD (158 aa). The 229-residue stretch at 268 to 496 folds into the Radical SAM core domain; it reads TVGSRVGQLY…TYKQGIINVP (229 aa). [4Fe-4S] cluster is bound by residues Cys-282, Cys-286, and Cys-289.

Belongs to the radical SAM superfamily. [4Fe-4S] cluster serves as cofactor. Requires methylcob(III)alamin as cofactor.

The catalysed reaction is cytidine 5'-{[hydroxy(2-hydroxyethyl)phosphonoyl]phosphate} + AH2 + 2 S-adenosyl-L-methionine = cytidine 5'-({hydroxy[(S)-2-hydroxypropyl]phosphonoyl}phosphate) + 5'-deoxyadenosine + L-methionine + A + S-adenosyl-L-homocysteine + 2 H(+). It participates in antibiotic biosynthesis; fosfomycin biosynthesis. Involved in fosfomycin biosynthesis. Catalyzes the C-methylation of cytidylyl-2-hydroxyethylphosphonate (HEP-CMP) to form cytidylyl-2-hydroxypropylphosphonate (HPP-CMP). The C-methylation is not stereoselective and the ratio of (S)- to (R)-HPP-CMP is almost equal in vitro. This chain is Cytidylyl-2-hydroxyethylphosphonate methyltransferase, found in Streptomyces wedmorensis.